Consider the following 361-residue polypeptide: Chorismate synthase (361 aa).

Residue Arg47 coordinates NADP(+). Residues Arg124–Ser126, Gly286, Lys301–Thr305, and Arg327 contribute to the FMN site.

It belongs to the chorismate synthase family. In terms of assembly, homotetramer. The cofactor is FMNH2.

The enzyme catalyses 5-O-(1-carboxyvinyl)-3-phosphoshikimate = chorismate + phosphate. The protein operates within metabolic intermediate biosynthesis; chorismate biosynthesis; chorismate from D-erythrose 4-phosphate and phosphoenolpyruvate: step 7/7. Its function is as follows. Catalyzes the anti-1,4-elimination of the C-3 phosphate and the C-6 proR hydrogen from 5-enolpyruvylshikimate-3-phosphate (EPSP) to yield chorismate, which is the branch point compound that serves as the starting substrate for the three terminal pathways of aromatic amino acid biosynthesis. This reaction introduces a second double bond into the aromatic ring system. The chain is Chorismate synthase from Prochlorococcus marinus (strain NATL2A).